We begin with the raw amino-acid sequence, 151 residues long: Deoxyuridine 5'-triphosphate nucleotidohydrolase (151 aa).

Residues 70–72 (RSG), Asn-83, 87–89 (LID), and Met-97 each bind substrate.

Belongs to the dUTPase family. It depends on Mg(2+) as a cofactor.

The enzyme catalyses dUTP + H2O = dUMP + diphosphate + H(+). It participates in pyrimidine metabolism; dUMP biosynthesis; dUMP from dCTP (dUTP route): step 2/2. In terms of biological role, this enzyme is involved in nucleotide metabolism: it produces dUMP, the immediate precursor of thymidine nucleotides and it decreases the intracellular concentration of dUTP so that uracil cannot be incorporated into DNA. This Pseudomonas syringae pv. tomato (strain ATCC BAA-871 / DC3000) protein is Deoxyuridine 5'-triphosphate nucleotidohydrolase.